Here is a 122-residue protein sequence, read N- to C-terminus: UPF0231 protein VSAL_I2591 (122 aa).

This sequence belongs to the UPF0231 family.

The chain is UPF0231 protein VSAL_I2591 from Aliivibrio salmonicida (strain LFI1238) (Vibrio salmonicida (strain LFI1238)).